We begin with the raw amino-acid sequence, 318 residues long: Aspartate carbamoyltransferase catalytic subunit (318 aa).

The carbamoyl phosphate site is built by R58 and T59. K86 serves as a coordination point for L-aspartate. Carbamoyl phosphate contacts are provided by R108, H141, and Q144. L-aspartate contacts are provided by R174 and R226. Residues G270 and P271 each contribute to the carbamoyl phosphate site.

The protein belongs to the aspartate/ornithine carbamoyltransferase superfamily. ATCase family. Heterododecamer (2C3:3R2) of six catalytic PyrB chains organized as two trimers (C3), and six regulatory PyrI chains organized as three dimers (R2).

The catalysed reaction is carbamoyl phosphate + L-aspartate = N-carbamoyl-L-aspartate + phosphate + H(+). Its pathway is pyrimidine metabolism; UMP biosynthesis via de novo pathway; (S)-dihydroorotate from bicarbonate: step 2/3. Its function is as follows. Catalyzes the condensation of carbamoyl phosphate and aspartate to form carbamoyl aspartate and inorganic phosphate, the committed step in the de novo pyrimidine nucleotide biosynthesis pathway. The chain is Aspartate carbamoyltransferase catalytic subunit from Lactobacillus acidophilus (strain ATCC 700396 / NCK56 / N2 / NCFM).